A 32-amino-acid chain; its full sequence is Chlorophyll a-b binding protein 2, chloroplastic (32 aa).

Residues E19 and H22 each contribute to the chlorophyll a site. R24 serves as a coordination point for chlorophyll b.

The protein belongs to the light-harvesting chlorophyll a/b-binding (LHC) protein family. In terms of assembly, the LHC complex consists of chlorophyll a-b binding proteins. Requires Binds at least 14 chlorophylls (8 Chl-a and 6 Chl-b) and carotenoids such as lutein and neoxanthin. as cofactor. In terms of processing, photoregulated by reversible phosphorylation of its threonine residues.

The protein resides in the plastid. It is found in the chloroplast thylakoid membrane. Functionally, the light-harvesting complex (LHC) functions as a light receptor, it captures and delivers excitation energy to photosystems with which it is closely associated. In Populus euphratica (Euphrates poplar), this protein is Chlorophyll a-b binding protein 2, chloroplastic.